Here is a 438-residue protein sequence, read N- to C-terminus: Telomeric repeat-binding factor 1 (438 aa).

Residues 1-10 show a composition bias toward polar residues; sequence MAEDVSSTAP. Residues 1-36 form a disordered region; it reads MAEDVSSTAPSPRGCADGRDADPTEEQMAQTQRNDQ. An N-acetylalanine modification is found at A2. Position 11 is a phosphoserine (S11). Residues 58-268 form a TRFH dimerization region; the sequence is EEEEEDSGLV…AAAKVVESKR (211 aa). A Glycyl lysine isopeptide (Lys-Gly) (interchain with G-Cter in SUMO2) cross-link involves residue K213. S219 bears the Phosphoserine; by ATM mark. The tract at residues 265–378 is interaction with RLIM; that stretch reads ESKRTRTITS…PVTPEKHRAR (114 aa). The interval 268-311 is disordered; it reads RTRTITSQDKPSGNDVEMETEANLDTRKSVSDKQSAVTESSEGT. Residues 299 to 311 show a composition bias toward polar residues; the sequence is DKQSAVTESSEGT. K325 is covalently cross-linked (Glycyl lysine isopeptide (Lys-Gly) (interchain with G-Cter in SUMO2)). The segment at 326 to 375 is disordered; that stretch reads LQHGTQQQDLNKKERRVGTPQSTKKKKESRRATESRIPVSKSQPVTPEKH. The short motif at 337–356 is the Nuclear localization signal element; sequence KKERRVGTPQSTKKKKESRR. K366 participates in a covalent cross-link: Glycyl lysine isopeptide (Lys-Gly) (interchain with G-Cter in SUMO2). The HTH myb-type domain occupies 375–432; the sequence is HRARKRQAWLWEEDKNLRSGVRKYGEGNWSKILLHYKFNNRTSVMLKDRWRTMKKLKL. Positions 403–428 form a DNA-binding region, H-T-H motif; sequence WSKILLHYKFNNRTSVMLKDRWRTMK.

In terms of assembly, homodimer; can contain both isoforms. Found in a complex with POT1; TINF2 and TNKS1. Interacts with ATM, TINF2, TNKS1, TNKS2, PINX1, NEK2 and MAPRE1. Component of the shelterin complex (telosome) composed of TERF1, TERF2, TINF2, TERF2IP ACD and POT1. Interacts with RLIM (via N-terminus). Interacts with FBXO4. Interaction with TINF2 protects against interaction with FBXO4 and subsequent polyubiquitination and proteasomal degradation. Interacts with GNL3L; this interaction promotes homodimerization. Interacts with TIN2. Interactions with GNL3L and TIN2 are mutually exclusive. Interacts with RTEL1. Interacts with CCDC79/TERB1. Phosphorylated preferentially on Ser-219 in an ATM-dependent manner in response to ionizing DNA damage. Post-translationally, ADP-ribosylation by TNKS1 or TNKS2 diminishes its ability to bind to telomeric DNA. In terms of processing, ubiquitinated by RLIM/RNF12, leading to its degradation by the proteasome. Ubiquitinated by a SCF (SKP1-CUL1-F-box protein) ubiquitin-protein ligase complex, leading to its degradation by the proteasome.

The protein resides in the nucleus. Its subcellular location is the chromosome. It is found in the telomere. It localises to the cytoplasm. The protein localises to the cytoskeleton. The protein resides in the spindle. Binds the telomeric double-stranded 5'-TTAGGG-3' repeat and negatively regulates telomere length. Involved in the regulation of the mitotic spindle. Component of the shelterin complex (telosome) that is involved in the regulation of telomere length and protection. Shelterin associates with arrays of double-stranded 5'-TTAGGG-3' repeats added by telomerase and protects chromosome ends; without its protective activity, telomeres are no longer hidden from the DNA damage surveillance and chromosome ends are inappropriately processed by DNA repair pathways. The polypeptide is Telomeric repeat-binding factor 1 (TERF1) (Cricetulus griseus (Chinese hamster)).